Here is a 72-residue protein sequence, read N- to C-terminus: UPF0270 protein YheU (72 aa).

Belongs to the UPF0270 family.

This Salmonella choleraesuis (strain SC-B67) protein is UPF0270 protein YheU.